Reading from the N-terminus, the 317-residue chain is ATP synthase gamma chain (317 aa).

It belongs to the ATPase gamma chain family. As to quaternary structure, F-type ATPases have 2 components, CF(1) - the catalytic core - and CF(0) - the membrane proton channel. CF(1) has five subunits: alpha(3), beta(3), gamma(1), delta(1), epsilon(1). CF(0) has three main subunits: a, b and c.

It localises to the cellular thylakoid membrane. In terms of biological role, produces ATP from ADP in the presence of a proton gradient across the membrane. The gamma chain is believed to be important in regulating ATPase activity and the flow of protons through the CF(0) complex. The protein is ATP synthase gamma chain of Synechococcus sp. (strain CC9902).